The sequence spans 337 residues: U11/U12 small nuclear ribonucleoprotein 48 kDa protein (337 aa).

A CHHC U11-48K-type zinc finger spans residues 55-82; sequence IAICPYDSNHRMPKSSLTKHMESCRLRK. Zn(2+)-binding residues include cysteine 58, histidine 64, histidine 74, and cysteine 78. Residues lysine 87 and lysine 104 each participate in a glycyl lysine isopeptide (Lys-Gly) (interchain with G-Cter in SUMO2) cross-link. Residues 255 to 276 show a composition bias toward basic and acidic residues; it reads HWQEEQGRAGDAAEKNEERRSA. Residues 255-337 form a disordered region; the sequence is HWQEEQGRAG…HSHKRRKQKI (83 aa). Basic residues predominate over residues 294-310; it reads RHRRARSRSPHKRKRNK. A compositionally biased stretch (basic and acidic residues) spans 311–326; sequence DKSSESRRRKERDGER. Residues 327 to 337 are compositionally biased toward basic residues; that stretch reads HHSHKRRKQKI.

As to quaternary structure, component of the U11/U12 snRNPs that are part of the U12-type spliceosome. Not found in the major spliceosome.

The protein localises to the nucleus. Functionally, likely involved in U12-type 5' splice site recognition. The protein is U11/U12 small nuclear ribonucleoprotein 48 kDa protein (Snrnp48) of Mus musculus (Mouse).